The primary structure comprises 110 residues: MFARAASVFVLSLPILATANVLPRQDNQCNTGSLQCCSSVQSSSSSLVAILLGLLGVAAGGLTGQVGVTCSPITVIGVSGTSCSEQPVCCTGNTFNGVIATGCTPVNVNL.

Residues 1-19 (MFARAASVFVLSLPILATA) form the signal peptide. 4 cysteine pairs are disulfide-bonded: C29–C89, C36–C83, C37–C70, and C90–C103.

This sequence belongs to the fungal hydrophobin family. In terms of assembly, self-assembles to form functional amyloid fibrils called rodlets. Self-assembly into fibrillar rodlets occurs spontaneously at hydrophobic:hydrophilic interfaces and the rodlets further associate laterally to form amphipathic monolayers.

The protein resides in the secreted. Its subcellular location is the cell wall. Functionally, aerial growth, conidiation, and dispersal of filamentous fungi in the environment rely upon a capability of their secreting small amphipathic proteins called hydrophobins (HPBs) with low sequence identity. Class I can self-assemble into an outermost layer of rodlet bundles on aerial cell surfaces, conferring cellular hydrophobicity that supports fungal growth, development and dispersal; whereas Class II form highly ordered films at water-air interfaces through intermolecular interactions but contribute nothing to the rodlet structure. Pnh2 is a class I hydrophobin that might be involved in the attachment of the hydrophilic wall of hyphae to the hydrophobic surface of wood under inorganic phosphate (Pi)-deficient conditions and enable the mycelium to degrade efficiently the components of wood and to acquire nutrients containing Pi. This is Class I hydrophobin 2 from Pholiota nameko.